Here is a 233-residue protein sequence, read N- to C-terminus: MQLGVNVDHVATLRNLRGTTYPSIVELANIAVEHGADFITVHLREDRRHVRDDDLYALKKHVNVPINLEMAATEEMLAIAKELSPEFVCLVPEKREEVTTESGLDTKLLYDTRLFIISELQRHGIKVTLFLDPSEEDIACAKRMNVDKIELHVGAYCISRAPQELEMITRAAQLVHEAGMICHAGHGIDYECAAAISKVKHITAINVGHFLVCEAITQGMGNAVRKMKDIITS.

Asn6 is a 3-amino-2-oxopropyl phosphate binding site. 8-9 is a binding site for 1-deoxy-D-xylulose 5-phosphate; that stretch reads DH. Arg17 provides a ligand contact to 3-amino-2-oxopropyl phosphate. The Proton acceptor role is filled by His42. Positions 44 and 49 each coordinate 1-deoxy-D-xylulose 5-phosphate. Residue Glu69 is the Proton acceptor of the active site. Thr99 is a 1-deoxy-D-xylulose 5-phosphate binding site. The Proton donor role is filled by His186. Residues Gly187 and 208-209 contribute to the 3-amino-2-oxopropyl phosphate site; that span reads GH.

Belongs to the PNP synthase family. In terms of assembly, homooctamer; tetramer of dimers.

The protein resides in the cytoplasm. The enzyme catalyses 3-amino-2-oxopropyl phosphate + 1-deoxy-D-xylulose 5-phosphate = pyridoxine 5'-phosphate + phosphate + 2 H2O + H(+). The protein operates within cofactor biosynthesis; pyridoxine 5'-phosphate biosynthesis; pyridoxine 5'-phosphate from D-erythrose 4-phosphate: step 5/5. Catalyzes the complicated ring closure reaction between the two acyclic compounds 1-deoxy-D-xylulose-5-phosphate (DXP) and 3-amino-2-oxopropyl phosphate (1-amino-acetone-3-phosphate or AAP) to form pyridoxine 5'-phosphate (PNP) and inorganic phosphate. The chain is Pyridoxine 5'-phosphate synthase from Anaplasma phagocytophilum (strain HZ).